Here is a 108-residue protein sequence, read N- to C-terminus: Small ribosomal subunit protein uS10 (108 aa).

The protein belongs to the universal ribosomal protein uS10 family. As to quaternary structure, part of the 30S ribosomal subunit.

Its function is as follows. Involved in the binding of tRNA to the ribosomes. The sequence is that of Small ribosomal subunit protein uS10 from Ehrlichia chaffeensis (strain ATCC CRL-10679 / Arkansas).